The following is a 342-amino-acid chain: dTDP-3,4-didehydro-2,6-dideoxy-alpha-D-glucose 3-reductase (342 aa).

19–25 (CADIALR) contacts NADP(+). Position 26 (arginine 26) interacts with substrate. Residues 44–45 (SR), tyrosine 65, leucine 81, and histidine 86 each bind NADP(+). The active-site Proton donor is lysine 104. NADP(+)-binding residues include arginine 172 and aspartate 184. Positions 243 and 263 each coordinate substrate.

Belongs to the Gfo/Idh/MocA family.

The catalysed reaction is dTDP-4-dehydro-2,6-dideoxy-alpha-D-glucose + NADP(+) = dTDP-3,4-didehydro-2,6-dideoxy-alpha-D-glucose + NADPH + H(+). The protein operates within antibiotic biosynthesis; granaticin biosynthesis. In terms of biological role, involved in the biosynthesis of the 2,6-deoxysugar, dTDP-L-rhodinose, attached to the benzoisochromane quinone chromophore to produce the aglycone antibiotics granaticin and granaticin B. Catalyzes the reduction of the C-3 keto moiety of dTDP-3,4-diketo-2,6-dideoxy-alpha-D-glucose to yield dTDP-4-keto-2,6-dideoxy-alpha-D-glucose. NADPH is the better reductant, however NADH can also be used. This chain is dTDP-3,4-didehydro-2,6-dideoxy-alpha-D-glucose 3-reductase, found in Streptomyces violaceoruber.